A 318-amino-acid chain; its full sequence is UDP-N-acetylenolpyruvoylglucosamine reductase (318 aa).

The region spanning 38-204 (IGGVCPVIVE…LGIEILLKEG (167 aa)) is the FAD-binding PCMH-type domain. Arginine 182 is a catalytic residue. Over residues 212–229 (SLKDKRDRRNSSQPENKK) the composition is skewed to basic and acidic residues. The segment at 212-232 (SLKDKRDRRNSSQPENKKSAG) is disordered. Serine 233 serves as the catalytic Proton donor. Glutamate 310 is an active-site residue.

Belongs to the MurB family. The cofactor is FAD.

The protein resides in the cytoplasm. The enzyme catalyses UDP-N-acetyl-alpha-D-muramate + NADP(+) = UDP-N-acetyl-3-O-(1-carboxyvinyl)-alpha-D-glucosamine + NADPH + H(+). Its pathway is cell wall biogenesis; peptidoglycan biosynthesis. Functionally, cell wall formation. The protein is UDP-N-acetylenolpyruvoylglucosamine reductase of Leptospira interrogans serogroup Icterohaemorrhagiae serovar copenhageni (strain Fiocruz L1-130).